A 193-amino-acid chain; its full sequence is Adenylate kinase (193 aa).

Residue 11 to 16 (GSGKGT) coordinates ATP. The NMP stretch occupies residues 31 to 60 (STGDIFRANVKGETPLGLEAKKYMDAGDYV). AMP-binding positions include T32, R37, 58–60 (DYV), 86–89 (GYPR), and Q93. Residues 127-137 (GRAKESGRSDD) are LID. R128 provides a ligand contact to ATP. AMP contacts are provided by R134 and R145. G173 contacts ATP.

It belongs to the adenylate kinase family. Monomer.

Its subcellular location is the cytoplasm. It carries out the reaction AMP + ATP = 2 ADP. It functions in the pathway purine metabolism; AMP biosynthesis via salvage pathway; AMP from ADP: step 1/1. Functionally, catalyzes the reversible transfer of the terminal phosphate group between ATP and AMP. Plays an important role in cellular energy homeostasis and in adenine nucleotide metabolism. The polypeptide is Adenylate kinase (Renibacterium salmoninarum (strain ATCC 33209 / DSM 20767 / JCM 11484 / NBRC 15589 / NCIMB 2235)).